We begin with the raw amino-acid sequence, 209 residues long: Nucleoside triphosphate pyrophosphatase (209 aa).

The Proton acceptor role is filled by Asp-79.

It belongs to the Maf family. The cofactor is a divalent metal cation.

The protein resides in the cytoplasm. It catalyses the reaction a ribonucleoside 5'-triphosphate + H2O = a ribonucleoside 5'-phosphate + diphosphate + H(+). It carries out the reaction a 2'-deoxyribonucleoside 5'-triphosphate + H2O = a 2'-deoxyribonucleoside 5'-phosphate + diphosphate + H(+). Nucleoside triphosphate pyrophosphatase. May have a dual role in cell division arrest and in preventing the incorporation of modified nucleotides into cellular nucleic acids. The polypeptide is Nucleoside triphosphate pyrophosphatase (Mycolicibacterium gilvum (strain PYR-GCK) (Mycobacterium gilvum (strain PYR-GCK))).